The chain runs to 142 residues: Putative pre-16S rRNA nuclease (142 aa).

The protein belongs to the YqgF nuclease family.

The protein localises to the cytoplasm. Could be a nuclease involved in processing of the 5'-end of pre-16S rRNA. In Azotobacter vinelandii (strain DJ / ATCC BAA-1303), this protein is Putative pre-16S rRNA nuclease.